Consider the following 89-residue polypeptide: Probable Fe(2+)-trafficking protein (89 aa).

The protein belongs to the Fe(2+)-trafficking protein family.

In terms of biological role, could be a mediator in iron transactions between iron acquisition and iron-requiring processes, such as synthesis and/or repair of Fe-S clusters in biosynthetic enzymes. In Stenotrophomonas maltophilia (strain K279a), this protein is Probable Fe(2+)-trafficking protein.